A 660-amino-acid polypeptide reads, in one-letter code: Pentatricopeptide repeat-containing protein At4g20090 (660 aa).

PPR repeat units follow at residues 76–110 (GDST…NRVI), 111–141 (IERS…MVDE), 147–181 (SVKS…NMNM), 186–220 (NGLS…KCLP), 221–255 (DGYT…GCSP), 256–290 (SPVI…GCVP), 291–325 (NEVT…KCIP), 326–360 (NDVT…GYHL), 361–395 (NQHI…GCKP), 396–430 (NIVV…GCLP), 431–465 (NAYT…GCSR), 466–500 (NKFC…GIKP), 501–535 (DTVA…EEPK), 539–573 (DVVT…GCDP), and 574–609 (DVIT…LLKR).

This sequence belongs to the PPR family. P subfamily.

In terms of biological role, may play a role in embryogenesis. The sequence is that of Pentatricopeptide repeat-containing protein At4g20090 (EMB1025) from Arabidopsis thaliana (Mouse-ear cress).